We begin with the raw amino-acid sequence, 129 residues long: Small ribosomal subunit protein uS11 (129 aa).

It belongs to the universal ribosomal protein uS11 family. As to quaternary structure, part of the 30S ribosomal subunit. Interacts with proteins S7 and S18. Binds to IF-3.

Located on the platform of the 30S subunit, it bridges several disparate RNA helices of the 16S rRNA. Forms part of the Shine-Dalgarno cleft in the 70S ribosome. The sequence is that of Small ribosomal subunit protein uS11 from Nitrosospira multiformis (strain ATCC 25196 / NCIMB 11849 / C 71).